A 387-amino-acid polypeptide reads, in one-letter code: Phosphoglycerate kinase (387 aa).

Residues 21–23 (DLN), Arg36, and 59–62 (HLGR) contribute to the substrate site. An N6-acetyllysine modification is found at Lys84. The substrate site is built by Arg113 and Arg146. ATP is bound by residues Lys197, Glu314, and 340–343 (GGDT).

This sequence belongs to the phosphoglycerate kinase family. As to quaternary structure, monomer.

It localises to the cytoplasm. The catalysed reaction is (2R)-3-phosphoglycerate + ATP = (2R)-3-phospho-glyceroyl phosphate + ADP. It participates in carbohydrate degradation; glycolysis; pyruvate from D-glyceraldehyde 3-phosphate: step 2/5. The polypeptide is Phosphoglycerate kinase (Escherichia coli O139:H28 (strain E24377A / ETEC)).